The primary structure comprises 268 residues: Undecaprenyl-diphosphatase (268 aa).

7 consecutive transmembrane segments (helical) span residues 47–67 (FTIL…FAKL), 83–103 (FVIG…LAGG), 109–129 (LFNP…LLWV), 144–164 (FPLP…IPGV), 184–204 (AAEF…VYDL), 217–237 (LIVA…VKSF), and 246–266 (FTLF…ALAL).

Belongs to the UppP family.

The protein localises to the cell inner membrane. The enzyme catalyses di-trans,octa-cis-undecaprenyl diphosphate + H2O = di-trans,octa-cis-undecaprenyl phosphate + phosphate + H(+). Catalyzes the dephosphorylation of undecaprenyl diphosphate (UPP). Confers resistance to bacitracin. This is Undecaprenyl-diphosphatase from Rhodopseudomonas palustris (strain BisB18).